The primary structure comprises 423 residues: UDP-N-acetylglucosamine 1-carboxyvinyltransferase 2 (423 aa).

Phosphoenolpyruvate is bound at residue Lys23–Asn24. Arg93 provides a ligand contact to UDP-N-acetyl-alpha-D-glucosamine. Cys117 functions as the Proton donor in the catalytic mechanism. Position 117 is a 2-(S-cysteinyl)pyruvic acid O-phosphothioketal (Cys117). UDP-N-acetyl-alpha-D-glucosamine-binding positions include Arg122–Gln126, Asp305, and Ile327.

This sequence belongs to the EPSP synthase family. MurA subfamily.

It is found in the cytoplasm. It catalyses the reaction phosphoenolpyruvate + UDP-N-acetyl-alpha-D-glucosamine = UDP-N-acetyl-3-O-(1-carboxyvinyl)-alpha-D-glucosamine + phosphate. It functions in the pathway cell wall biogenesis; peptidoglycan biosynthesis. In terms of biological role, cell wall formation. Adds enolpyruvyl to UDP-N-acetylglucosamine. The protein is UDP-N-acetylglucosamine 1-carboxyvinyltransferase 2 of Listeria innocua serovar 6a (strain ATCC BAA-680 / CLIP 11262).